Consider the following 545-residue polypeptide: Cannabidiolic acid synthase-like 2 (545 aa).

The first 28 residues, 1-28 (MKCSTFCFWYVCKIIFFFLSFNIQISIA), serve as a signal peptide directing secretion. A disulfide bridge links C37 with C99. 4 N-linked (GlcNAc...) asparagine glycosylation sites follow: N45, N65, N89, and N168. Residues 77–251 (TTPKPLVITT…AAWKIRLVAV (175 aa)) form the FAD-binding PCMH-type domain. Positions 114–176 (HDAEGMSYIS…ENLSFPAGYC (63 aa)) form a cross-link, 6-(S-cysteinyl)-8alpha-(pros-histidyl)-FAD (His-Cys). Substrate is bound at residue H292. N-linked (GlcNAc...) asparagine glycosylation is found at N297, N305, N329, and N361. Residue Y417 coordinates substrate. N467 carries an N-linked (GlcNAc...) asparagine glycan. Y484 acts as the Proton acceptor in catalysis. The N-linked (GlcNAc...) asparagine glycan is linked to N499.

Belongs to the oxygen-dependent FAD-linked oxidoreductase family. It depends on FAD as a cofactor. The FAD cofactor is bound via a bicovalent 6-S-cysteinyl, 8alpha-N1-histidyl FAD linkage.

It localises to the secreted. Its function is as follows. Has no cannabidiolic acid synthase activity. The sequence is that of Cannabidiolic acid synthase-like 2 (CBDAS3) from Cannabis sativa (Hemp).